A 475-amino-acid polypeptide reads, in one-letter code: Vasculin-like protein 1 (475 aa).

Phosphoserine occurs at positions 49 and 76. Disordered stretches follow at residues 92 to 115 and 160 to 191; these read NLSG…GSTG and PSLN…SAKQ. S202 carries the phosphoserine modification. Disordered stretches follow at residues 237-271 and 292-318; these read LVPK…EAAL and PKES…RRTT. A compositionally biased stretch (low complexity) spans 294-311; it reads ESPSSTTPPIEISSSRLT. Phosphothreonine is present on T300. A Phosphoserine modification is found at S383. Positions 456-475 are disordered; sequence CEDSDTETSSSETSDDDAWK.

This sequence belongs to the vasculin family.

It localises to the nucleus. Its function is as follows. Possible transcription factor. In Rattus norvegicus (Rat), this protein is Vasculin-like protein 1 (Gpbp1l1).